We begin with the raw amino-acid sequence, 629 residues long: MGLEEQLRLLPDRPGCYLFKDASGRIIYVGKARNLKNRVRQYFQSSRNLTAKVLAMVGQIVEIEHIVTDTETEALVLESNLIKKHKPKYNIRLRDDKHYPYLRLTLTEQWPRLVVARSMKKDGSRYFGPYTSSQAMWETMKLARRLFPLRTCNDPSRYPRGCLQYHIGRCLGPCLPDFDRHREYAEAVRDLQAFLEGRTQEVLERLRARMEQAAERLEFERAAELRDQIRAIEKVTEKQKIIAHTMVDLDVIAYARLYDEAGVQVFFVRQGKLVGRDQFLMSGADEMTGGEILAAFIQQHYSQTDFVPKEILVSEDLPDADVIAEWLSAKRGSRVALRCPKRGEKRALVEMVAQNAQEAMTERRQQRELELAATEGVLRELQAYLDLPRLPHRIECFDVSHVQGAEVVASMVVFEGGRPKKSDYRRFKMKVDQNNDFANMAEAVGRRFRRGLAERAAQVEGRVRDLEEGRVAEGGAEYGGKFADFPDLLIIDGGKGQLSYARAVMRELGVDHIPTFGLAKENELLCTEDRPDWIELPRGSQALFLLQRIRDEAHRFAITYHRKLHRRASTHSRLDDVPGIGPKRKKALLQHFGSLKAIREASVEEVAQVPGITLELAERVKEALGGPMR.

The GIY-YIG domain occupies 12–91 (DRPGCYLFKD…IKKHKPKYNI (80 aa)). A UVR domain is found at 200–235 (QEVLERLRARMEQAAERLEFERAAELRDQIRAIEKV).

Belongs to the UvrC family. Interacts with UvrB in an incision complex.

It is found in the cytoplasm. In terms of biological role, the UvrABC repair system catalyzes the recognition and processing of DNA lesions. UvrC both incises the 5' and 3' sides of the lesion. The N-terminal half is responsible for the 3' incision and the C-terminal half is responsible for the 5' incision. The sequence is that of UvrABC system protein C from Symbiobacterium thermophilum (strain DSM 24528 / JCM 14929 / IAM 14863 / T).